A 991-amino-acid polypeptide reads, in one-letter code: Translation initiation factor IF-2 (991 aa).

Disordered regions lie at residues 58–82 (EGKK…GRSR) and 106–405 (QARA…PAPQ). Low complexity predominate over residues 106–164 (QARADAAASDAAPAEPAPAAAEPSASAPVTAPVNAPAADAPQAPATAAPDTAAPAAETP). A compositionally biased stretch (pro residues) spans 165–175 (SQPPAVEPQPA). Low complexity-rich tracts occupy residues 190-206 (AKPA…AAVE), 221-258 (AVQA…ASKP), and 267-276 (APVPVAAPAV). The span at 279–289 (AGREEARRAAE) shows a compositional bias: basic and acidic residues. Gly residues predominate over residues 379–388 (RAGGKGGKGG). The span at 395–405 (QAERRHEPAPQ) shows a compositional bias: basic and acidic residues. The tr-type G domain occupies 492–659 (PRAPVVTVMG…NVLLQAEILE (168 aa)). The segment at 501 to 508 (GHVDHGKT) is G1. 501–508 (GHVDHGKT) contacts GTP. Positions 526–530 (GITQH) are G2. Residues 547-550 (DTPG) form a G3 region. GTP is bound by residues 547 to 551 (DTPGH) and 601 to 604 (NKID). The tract at residues 601–604 (NKID) is G4. A G5 region spans residues 637–639 (SAK).

The protein belongs to the TRAFAC class translation factor GTPase superfamily. Classic translation factor GTPase family. IF-2 subfamily.

It localises to the cytoplasm. Its function is as follows. One of the essential components for the initiation of protein synthesis. Protects formylmethionyl-tRNA from spontaneous hydrolysis and promotes its binding to the 30S ribosomal subunits. Also involved in the hydrolysis of GTP during the formation of the 70S ribosomal complex. This Bordetella petrii (strain ATCC BAA-461 / DSM 12804 / CCUG 43448) protein is Translation initiation factor IF-2.